The primary structure comprises 1283 residues: Peroxisomal ATPase PEX1 (1283 aa).

The tract at residues 346-367 (SKTKQNVLSPEKEKQMSEPLDQ) is disordered. Residue serine 354 is modified to Phosphoserine. Positions 355–367 (PEKEKQMSEPLDQ) are enriched in basic and acidic residues. Residues 599–606 (GGKGSGKS) and 881–888 (GPPGTGKT) contribute to the ATP site. A phosphoserine mark is found at serine 1181, serine 1209, and serine 1211. Positions 1260–1283 (FQNPKRRKNQSGTMFRPGQKVTLA) are disordered.

The protein belongs to the AAA ATPase family. As to quaternary structure, homooligomer; homooligomerizes in the cytosol, interaction with PEX6 promotes dissociation of the homooligomer. Interacts with PEX6; forming the PEX1-PEX6 AAA ATPase complex, which is composed of a heterohexamer formed by a trimer of PEX1-PEX6 dimers. Interacts indirectly with PEX26, via its interaction with PEX6.

Its subcellular location is the cytoplasm. It is found in the cytosol. The protein resides in the peroxisome membrane. It carries out the reaction ATP + H2O = ADP + phosphate + H(+). Component of the PEX1-PEX6 AAA ATPase complex, a protein dislocase complex that mediates the ATP-dependent extraction of the PEX5 receptor from peroxisomal membranes, an essential step for PEX5 recycling. Specifically recognizes PEX5 monoubiquitinated at 'Cys-11', and pulls it out of the peroxisome lumen through the PEX2-PEX10-PEX12 retrotranslocation channel. Extraction by the PEX1-PEX6 AAA ATPase complex is accompanied by unfolding of the TPR repeats and release of bound cargo from PEX5. This Homo sapiens (Human) protein is Peroxisomal ATPase PEX1.